The chain runs to 1364 residues: Pleckstrin homology domain-containing family H member 1 (1364 aa).

The stretch at 28–169 (FRLQASKIRE…VGSLQDALEA (142 aa)) forms a coiled coil. 5 disordered regions span residues 184–266 (GAAE…SPPH), 296–321 (GTKTSAREGGPGSSLTLPKVRAPGTP), 356–395 (LHPSGLPELESRARSREEPEKMEMEEPPPAGKNEERESPK), 487–529 (PFMD…IKRG), and 546–568 (DACSLDSDYSEPEHKLQRTSSYS). Residues 237–246 (EDSSSSTVHS) are compositionally biased toward polar residues. Over residues 364–379 (LESRARSREEPEKMEM) the composition is skewed to basic and acidic residues. Over residues 509–520 (VPSSESRKTSGL) the composition is skewed to polar residues. 2 PH domains span residues 578–672 (SLEK…SLLK) and 687–796 (KPTV…VAAG). S745 bears the Phosphoserine mark. Positions 832–986 (YSKDGLYASL…PSRMEVVSIL (155 aa)) constitute a MyTH4 domain. The region spanning 997-1333 (FSIPVHFTNG…NHCTTTVNPP (337 aa)) is the FERM domain.

The sequence is that of Pleckstrin homology domain-containing family H member 1 (PLEKHH1) from Homo sapiens (Human).